Consider the following 197-residue polypeptide: Probable calcium-binding protein CML21 (197 aa).

Positions 1-33 are disordered; it reads MLRPPPPSSVLTASAAAARPPASVVQPQRQAAH. Low complexity predominate over residues 9–30; that stretch reads SVLTASAAAARPPASVVQPQRQ. EF-hand domains lie at 37-72, 126-161, and 164-197; these read AETL…LGAR, EKEA…MGLP, and ACMA…AAGN. Residues Asp50, Asp52, Asp54, Glu61, Asp139, Asp141, Asp143, Tyr145, Glu150, Asp177, Asp179, Asp181, Arg183, and Glu188 each coordinate Ca(2+).

Potential calcium sensor. The sequence is that of Probable calcium-binding protein CML21 (CML21) from Oryza sativa subsp. japonica (Rice).